Here is a 265-residue protein sequence, read N- to C-terminus: Mlc titration factor A (265 aa).

Residues H111, H148, H152, and E211 each coordinate Zn(2+).

The protein belongs to the MtfA family. Interacts with Mlc. The cofactor is Zn(2+).

It localises to the cytoplasm. Its function is as follows. Involved in the modulation of the activity of the glucose-phosphotransferase system (glucose-PTS). Interacts with the transcriptional repressor Mlc, preventing its interaction with DNA and leading to the modulation of expression of genes regulated by Mlc, including ptsG, which encodes the PTS system glucose-specific EIICB component. In terms of biological role, shows zinc-dependent metallopeptidase activity. This Salmonella typhi protein is Mlc titration factor A.